An 86-amino-acid polypeptide reads, in one-letter code: Serine protease inhibitor Kazal-type 4 (86 aa).

An N-terminal signal peptide occupies residues 1–26; sequence MAMHLWLVTLTLVPLLGMDRELMVSA. The Kazal-like domain maps to 31-86; it reads FPRMPFCEHMAELPNCPQTPNLICGTDGLTYENECHLCLTRMKTMKDIQIMKDGQC. 3 cysteine pairs are disulfide-bonded: cysteine 37/cysteine 68, cysteine 46/cysteine 65, and cysteine 54/cysteine 86.

Expressed in the intestinal tract.

The protein resides in the secreted. The polypeptide is Serine protease inhibitor Kazal-type 4 (Spink4) (Mus musculus (Mouse)).